A 321-amino-acid polypeptide reads, in one-letter code: F420-non-reducing hydrogenase iron-sulfur subunit G (321 aa).

The protein belongs to the [NiFe]/[NiFeSe] hydrogenase small subunit family. In terms of assembly, the F420-non-reducing hydrogenase is composed of three subunits; MvhA, MvhD and MvhG. It forms a complex with the heterodisulfide reductase (Hdr).

The protein localises to the cytoplasm. In terms of biological role, part of a complex that provides reducing equivalents for heterodisulfide reductase. The polypeptide is F420-non-reducing hydrogenase iron-sulfur subunit G (mvhG) (Archaeoglobus profundus (strain DSM 5631 / JCM 9629 / NBRC 100127 / Av18)).